The following is a 643-amino-acid chain: Threonine--tRNA ligase (643 aa).

The 61-residue stretch at 1-61 folds into the TGS domain; the sequence is MPIITLPDGS…EQDATLEIIT (61 aa). The tract at residues 243 to 534 is catalytic; it reads DHRKIGKALD…ITEEYAGFFP (292 aa). Zn(2+) contacts are provided by Cys334, His385, and His511.

The protein belongs to the class-II aminoacyl-tRNA synthetase family. As to quaternary structure, homodimer. It depends on Zn(2+) as a cofactor.

It is found in the cytoplasm. It catalyses the reaction tRNA(Thr) + L-threonine + ATP = L-threonyl-tRNA(Thr) + AMP + diphosphate + H(+). Functionally, catalyzes the attachment of threonine to tRNA(Thr) in a two-step reaction: L-threonine is first activated by ATP to form Thr-AMP and then transferred to the acceptor end of tRNA(Thr). Also edits incorrectly charged L-seryl-tRNA(Thr). The polypeptide is Threonine--tRNA ligase (Haemophilus influenzae (strain PittEE)).